The sequence spans 408 residues: Glutamate N-acetyltransferase (408 aa).

Substrate is bound by residues Thr-150, Lys-176, Thr-189, Glu-271, Asn-403, and Thr-408. The active-site Nucleophile is the Thr-189.

This sequence belongs to the ArgJ family. In terms of assembly, heterotetramer of two alpha and two beta chains.

It localises to the cytoplasm. It catalyses the reaction N(2)-acetyl-L-ornithine + L-glutamate = N-acetyl-L-glutamate + L-ornithine. Its pathway is amino-acid biosynthesis; L-arginine biosynthesis; L-ornithine and N-acetyl-L-glutamate from L-glutamate and N(2)-acetyl-L-ornithine (cyclic): step 1/1. Catalyzes the transfer of the acetyl group from N(2)-acetylornithine to glutamate, forming N-acetylglutamate and L-ornithine. The protein is Glutamate N-acetyltransferase of Methanococcus maripaludis (strain C5 / ATCC BAA-1333).